Consider the following 230-residue polypeptide: Cytochrome b6-f complex iron-sulfur subunit, chloroplastic (230 aa).

A chloroplast-targeting transit peptide spans 1-51; sequence MASFTLSSATPSQLCSSKNGMFAPSLALAKAGRVNVLISKERIRGMKLTCQ. The chain crosses the membrane as a helical span at residues 73–93; sequence LLGALSLPTGYMLLPYASFFV. The Rieske domain maps to 116 to 212; it reads AAEWLKTHAP…CDVDDGKVVF (97 aa). Residues Cys-158, His-160, Cys-176, and His-179 each coordinate [2Fe-2S] cluster. A disulfide bridge connects residues Cys-163 and Cys-178.

The protein belongs to the Rieske iron-sulfur protein family. As to quaternary structure, the 4 large subunits of the cytochrome b6-f complex are cytochrome b6, subunit IV (17 kDa polypeptide, petD), cytochrome f and the Rieske protein, while the 4 small subunits are petG, petL, petM and petN. The complex functions as a dimer. Requires [2Fe-2S] cluster as cofactor.

The protein resides in the plastid. Its subcellular location is the chloroplast thylakoid membrane. The catalysed reaction is 2 oxidized [plastocyanin] + a plastoquinol + 2 H(+)(in) = 2 reduced [plastocyanin] + a plastoquinone + 4 H(+)(out). Its function is as follows. Component of the cytochrome b6-f complex, which mediates electron transfer between photosystem II (PSII) and photosystem I (PSI), cyclic electron flow around PSI, and state transitions. The sequence is that of Cytochrome b6-f complex iron-sulfur subunit, chloroplastic (petC) from Spinacia oleracea (Spinach).